The chain runs to 122 residues: Large ribosomal subunit protein uL22c (122 aa).

Belongs to the universal ribosomal protein uL22 family. Part of the 50S ribosomal subunit.

Its subcellular location is the plastid. It is found in the chloroplast. In terms of biological role, this protein binds specifically to 23S rRNA. The globular domain of the protein is located near the polypeptide exit tunnel on the outside of the subunit, while an extended beta-hairpin is found that lines the wall of the exit tunnel in the center of the 70S ribosome. The protein is Large ribosomal subunit protein uL22c (rpl22) of Adiantum capillus-veneris (Maidenhair fern).